The primary structure comprises 930 residues: Type I restriction enzyme SsaAORF53P endonuclease subunit (930 aa).

The Helicase ATP-binding domain occupies 254-418 (HQATETSNNG…DGRSTADIFG (165 aa)). Residue 268–274 (TTGSGKT) coordinates ATP.

The protein belongs to the HsdR family. The type I restriction/modification system is composed of three polypeptides R, M and S.

It catalyses the reaction Endonucleolytic cleavage of DNA to give random double-stranded fragments with terminal 5'-phosphates, ATP is simultaneously hydrolyzed.. Its function is as follows. The restriction (R) subunit of a type I restriction enzyme that recognizes an undetermined sequence and cleaves a random distance away. Subunit R is required for both nuclease and ATPase activities, but not for modification. After locating a non-methylated recognition site, the enzyme complex serves as a molecular motor that translocates DNA in an ATP-dependent manner until a collision occurs that triggers cleavage. The sequence is that of Type I restriction enzyme SsaAORF53P endonuclease subunit from Staphylococcus saprophyticus subsp. saprophyticus (strain ATCC 15305 / DSM 20229 / NCIMB 8711 / NCTC 7292 / S-41).